The sequence spans 391 residues: uncharacterized protein (391 aa).

A run of 12 helical transmembrane segments spans residues 7-27 (FILVLLVSISGFSQGMLLPVI), 39-59 (AINGLHATGLYIGVLLASPFM), 66-88 (LGFKPLIVMGGSIVILSLFGFIW), 92-111 (VWVWFLLRLFIGIGDHMLHF), 131-151 (SIYGLSFGLGFAAGPFMVPLV), 156-176 (SLPFIVSGCISLFAWLFVFFL), 197-217 (FYQAMLFGWVAFMPTFGYGFL), 239-259 (VAIILPAFAIGSIIFQFPLGI), 269-289 (VLLVILLTGALCFFIAGVFPS), 292-312 (VIGGCFFIAGMAVGSTFTLGI), 329-349 (LLCGITFSLGSILGPVAGGWY), and 356-376 (ANLFYFITLTLSSVWLALVLG).

It belongs to the major facilitator superfamily.

The protein resides in the cell membrane. This is an uncharacterized protein from Bacillus subtilis (strain 168).